Here is an 89-residue protein sequence, read N- to C-terminus: Large ribosomal subunit protein bL27 (89 aa).

The segment at 1–22 is disordered; sequence MAHKKAGGSSRNGRDSAGRRLG.

This sequence belongs to the bacterial ribosomal protein bL27 family.

This Dinoroseobacter shibae (strain DSM 16493 / NCIMB 14021 / DFL 12) protein is Large ribosomal subunit protein bL27.